The following is a 473-amino-acid chain: Chromosomal replication initiator protein DnaA (473 aa).

The tract at residues Met1–Val87 is domain I, interacts with DnaA modulators. The interval Val87–Thr132 is domain II. Positions Arg133 to Ala349 are domain III, AAA+ region. Positions 177, 179, 180, and 181 each coordinate ATP. Residues Ser350–Arg473 are domain IV, binds dsDNA.

It belongs to the DnaA family. In terms of assembly, oligomerizes as a right-handed, spiral filament on DNA at oriC.

It localises to the cytoplasm. Plays an essential role in the initiation and regulation of chromosomal replication. ATP-DnaA binds to the origin of replication (oriC) to initiate formation of the DNA replication initiation complex once per cell cycle. Binds the DnaA box (a 9 base pair repeat at the origin) and separates the double-stranded (ds)DNA. Forms a right-handed helical filament on oriC DNA; dsDNA binds to the exterior of the filament while single-stranded (ss)DNA is stabiized in the filament's interior. The ATP-DnaA-oriC complex binds and stabilizes one strand of the AT-rich DNA unwinding element (DUE), permitting loading of DNA polymerase. After initiation quickly degrades to an ADP-DnaA complex that is not apt for DNA replication. Binds acidic phospholipids. In Leifsonia xyli subsp. xyli (strain CTCB07), this protein is Chromosomal replication initiator protein DnaA.